The following is a 488-amino-acid chain: Protein nucleotidyltransferase YdiU (488 aa).

G91, G93, R94, K114, D126, G127, R177, and R184 together coordinate ATP. The Proton acceptor role is filled by D253. N254 and D263 together coordinate Mg(2+). Residue D263 coordinates ATP.

Belongs to the SELO family. It depends on Mg(2+) as a cofactor. The cofactor is Mn(2+).

The enzyme catalyses L-seryl-[protein] + ATP = 3-O-(5'-adenylyl)-L-seryl-[protein] + diphosphate. The catalysed reaction is L-threonyl-[protein] + ATP = 3-O-(5'-adenylyl)-L-threonyl-[protein] + diphosphate. It carries out the reaction L-tyrosyl-[protein] + ATP = O-(5'-adenylyl)-L-tyrosyl-[protein] + diphosphate. It catalyses the reaction L-histidyl-[protein] + UTP = N(tele)-(5'-uridylyl)-L-histidyl-[protein] + diphosphate. The enzyme catalyses L-seryl-[protein] + UTP = O-(5'-uridylyl)-L-seryl-[protein] + diphosphate. The catalysed reaction is L-tyrosyl-[protein] + UTP = O-(5'-uridylyl)-L-tyrosyl-[protein] + diphosphate. Its function is as follows. Nucleotidyltransferase involved in the post-translational modification of proteins. It can catalyze the addition of adenosine monophosphate (AMP) or uridine monophosphate (UMP) to a protein, resulting in modifications known as AMPylation and UMPylation. This is Protein nucleotidyltransferase YdiU from Bacillus mycoides (strain KBAB4) (Bacillus weihenstephanensis).